The chain runs to 41 residues: uncharacterized protein (41 aa).

This is an uncharacterized protein from Archaeoglobus fulgidus (strain ATCC 49558 / DSM 4304 / JCM 9628 / NBRC 100126 / VC-16).